The chain runs to 277 residues: Large ribosomal subunit protein uL2 (277 aa).

3 disordered regions span residues 1–23, 36–58, and 219–277; these read MAIKKYKPTSNGRRGMTSSDFAE, PLHKKGGRNNQGKLTVRHQGGGH, and TVRG…RKNK. Positions 8–20 are enriched in polar residues; the sequence is PTSNGRRGMTSSD. Residues 258–277 are compositionally biased toward basic residues; the sequence is KTRKKKNKSDKFIVRRRKNK.

It belongs to the universal ribosomal protein uL2 family. Part of the 50S ribosomal subunit. Forms a bridge to the 30S subunit in the 70S ribosome.

In terms of biological role, one of the primary rRNA binding proteins. Required for association of the 30S and 50S subunits to form the 70S ribosome, for tRNA binding and peptide bond formation. It has been suggested to have peptidyltransferase activity; this is somewhat controversial. Makes several contacts with the 16S rRNA in the 70S ribosome. This is Large ribosomal subunit protein uL2 from Bacillus licheniformis (strain ATCC 14580 / DSM 13 / JCM 2505 / CCUG 7422 / NBRC 12200 / NCIMB 9375 / NCTC 10341 / NRRL NRS-1264 / Gibson 46).